Here is a 526-residue protein sequence, read N- to C-terminus: Peptide chain release factor 3 (526 aa).

The tr-type G domain occupies 9–277; sequence DKRRTFAIIS…GIVEWAPKPL (269 aa). GTP is bound by residues 18-25, 86-90, and 140-143; these read SHPDAGKT, DTPGH, and NKLD.

It belongs to the TRAFAC class translation factor GTPase superfamily. Classic translation factor GTPase family. PrfC subfamily.

It is found in the cytoplasm. Its function is as follows. Increases the formation of ribosomal termination complexes and stimulates activities of RF-1 and RF-2. It binds guanine nucleotides and has strong preference for UGA stop codons. It may interact directly with the ribosome. The stimulation of RF-1 and RF-2 is significantly reduced by GTP and GDP, but not by GMP. The sequence is that of Peptide chain release factor 3 from Shewanella baltica (strain OS155 / ATCC BAA-1091).